Reading from the N-terminus, the 338-residue chain is MRVLGIETSCDETGIAVYDDEKGLLSHALYSQVKLHADYGGVVPELASRDHVRKIVPLIRQALADADMTIEDLDGIAYTKGPGLIGALLVGACVGRALAFSWDKPAIGVHHMEGHLLAPMLEDDVPEFPFLALLVSGGHSMLVGVEGIGRYTVLGESVDDAAGEAFDKTAKLMGLDYPGGPRLSKLAAKGVPNSYRFPRPMTDKPGLNMSFSGLKTFAANTIAAEPKDEQTRANIACAFEEAVVDTLGIKCKRALKQTGYKNLVIAGGVSANTRLRASLSEMMQGLGGKVYYPRGEFCTDNGAMIAYAGLQRLKAGQVEDLAVKGQPRWPLDTLEPVD.

Fe cation-binding residues include His-111 and His-115. Substrate contacts are provided by residues 134-138 (LVSGG), Asp-167, Gly-180, and Asn-272. Asp-300 contributes to the Fe cation binding site.

The protein belongs to the KAE1 / TsaD family. Requires Fe(2+) as cofactor.

It is found in the cytoplasm. It catalyses the reaction L-threonylcarbamoyladenylate + adenosine(37) in tRNA = N(6)-L-threonylcarbamoyladenosine(37) in tRNA + AMP + H(+). Required for the formation of a threonylcarbamoyl group on adenosine at position 37 (t(6)A37) in tRNAs that read codons beginning with adenine. Is involved in the transfer of the threonylcarbamoyl moiety of threonylcarbamoyl-AMP (TC-AMP) to the N6 group of A37, together with TsaE and TsaB. TsaD likely plays a direct catalytic role in this reaction. The protein is tRNA N6-adenosine threonylcarbamoyltransferase of Shewanella halifaxensis (strain HAW-EB4).